Reading from the N-terminus, the 506-residue chain is Maturase K (506 aa).

It belongs to the intron maturase 2 family. MatK subfamily.

The protein resides in the plastid. The protein localises to the chloroplast. Its function is as follows. Usually encoded in the trnK tRNA gene intron. Probably assists in splicing its own and other chloroplast group II introns. The protein is Maturase K of Prunus dulcis (Almond).